The following is a 160-amino-acid chain: Cytochrome b6-f complex subunit 4 (160 aa).

3 helical membrane-spanning segments follow: residues 36 to 56 (IFYMFPVVIFGTFAGVIGLAV), 96 to 116 (LGVLLMAAVPAGLITVPFIKI), and 131 to 151 (TVFLVGTVAAIWLGIGAALPI).

This sequence belongs to the cytochrome b family. PetD subfamily. The 4 large subunits of the cytochrome b6-f complex are cytochrome b6, subunit IV (17 kDa polypeptide, petD), cytochrome f and the Rieske protein, while the 4 small subunits are petG, petL, petM and petN. The complex functions as a dimer.

Its subcellular location is the plastid. It localises to the chloroplast thylakoid membrane. In terms of biological role, component of the cytochrome b6-f complex, which mediates electron transfer between photosystem II (PSII) and photosystem I (PSI), cyclic electron flow around PSI, and state transitions. The protein is Cytochrome b6-f complex subunit 4 of Auxenochlorella protothecoides (Green microalga).